The primary structure comprises 218 residues: 1-Cys peroxiredoxin PER1 (218 aa).

One can recognise a Thioredoxin domain in the interval 4–164 (LTIGDTVPNL…VVRAVDSLLT (161 aa)). The active-site Cysteine sulfenic acid (-SOH) intermediate is the cysteine 46. The Bipartite nuclear localization signal signature appears at 194 to 217 (KKMFPQGFETADLPSKKGYLRFTK).

This sequence belongs to the peroxiredoxin family. Prx6 subfamily.

It localises to the nucleus. Its subcellular location is the cytoplasm. It catalyses the reaction a hydroperoxide + [thioredoxin]-dithiol = an alcohol + [thioredoxin]-disulfide + H2O. Thiol-specific peroxidase that catalyzes the reduction of hydrogen peroxide and organic hydroperoxides to water and alcohols, respectively. Seems to contribute to the inhibition of germination during stress. The sequence is that of 1-Cys peroxiredoxin PER1 (PER1) from Triticum aestivum (Wheat).